The chain runs to 270 residues: Meiotic recombination 1 protein (270 aa).

A KH domain is found at 191–225; the sequence is EIKLNKTQITFLIGAKGTRIESLREKSGASIKIIP.

Functionally, required for chromosome pairing and genetic recombination. MER1 may function to bring the axial elements of the synaptonemal complex corresponding to homologous chromosomes together by initiating recombination. MER1 might be responsible for regulating the MER2 gene and/or gene product. This chain is Meiotic recombination 1 protein (MER1), found in Saccharomyces cerevisiae (strain ATCC 204508 / S288c) (Baker's yeast).